Reading from the N-terminus, the 456-residue chain is Coenzyme F420 hydrogenase subunit alpha (456 aa).

The Ni(2+) site is built by Cys-63, Cys-66, Cys-432, and Cys-435.

It belongs to the [NiFe]/[NiFeSe] hydrogenase large subunit family. As to quaternary structure, pentamer of two alpha chains, two beta chains and a gamma chain. The cofactor is Ni(2+). It depends on iron-sulfur cluster as a cofactor. Requires FAD as cofactor.

It is found in the cell membrane. It carries out the reaction oxidized coenzyme F420-(gamma-L-Glu)(n) + H2 + H(+) = reduced coenzyme F420-(gamma-L-Glu)(n). Its function is as follows. Reduces the physiological low-potential two-electron acceptor coenzyme F420, and the artificial one-electron acceptor methylviologen. This Methanosarcina barkeri (strain Fusaro / DSM 804) protein is Coenzyme F420 hydrogenase subunit alpha (frhA).